A 211-amino-acid chain; its full sequence is Protein-methionine-sulfoxide reductase heme-binding subunit MsrQ (211 aa).

Helical transmembrane passes span 45 to 65, 82 to 102, 116 to 136, 153 to 173, and 178 to 198; these read HFTG…TPLA, LWCF…ELGV, PYLT…FTST, FVYL…KIIS, and IYAG…LSLF.

This sequence belongs to the MsrQ family. Heterodimer of a catalytic subunit (MsrP) and a heme-binding subunit (MsrQ). It depends on FMN as a cofactor. The cofactor is heme b.

The protein resides in the cell inner membrane. Functionally, part of the MsrPQ system that repairs oxidized periplasmic proteins containing methionine sulfoxide residues (Met-O), using respiratory chain electrons. Thus protects these proteins from oxidative-stress damage caused by reactive species of oxygen and chlorine generated by the host defense mechanisms. MsrPQ is essential for the maintenance of envelope integrity under bleach stress, rescuing a wide series of structurally unrelated periplasmic proteins from methionine oxidation, including the primary periplasmic chaperone SurA and the lipoprotein Pal. MsrQ provides electrons for reduction to the reductase catalytic subunit MsrP, using the quinone pool of the respiratory chain. The polypeptide is Protein-methionine-sulfoxide reductase heme-binding subunit MsrQ (Escherichia coli O127:H6 (strain E2348/69 / EPEC)).